Here is a 332-residue protein sequence, read N- to C-terminus: Fructose-1,6-bisphosphatase class 1 (332 aa).

Mg(2+)-binding residues include Glu-89, Asp-110, Leu-112, and Asp-113. Substrate-binding positions include 113 to 116, Asn-206, Tyr-239, 257 to 259, and Lys-269; these read DGSS and YLY. Position 275 (Glu-275) interacts with Mg(2+).

Belongs to the FBPase class 1 family. In terms of assembly, homotetramer. Mg(2+) is required as a cofactor.

The protein localises to the cytoplasm. It catalyses the reaction beta-D-fructose 1,6-bisphosphate + H2O = beta-D-fructose 6-phosphate + phosphate. It functions in the pathway carbohydrate biosynthesis; gluconeogenesis. This is Fructose-1,6-bisphosphatase class 1 from Escherichia coli (strain ATCC 8739 / DSM 1576 / NBRC 3972 / NCIMB 8545 / WDCM 00012 / Crooks).